The chain runs to 952 residues: Pentatricopeptide repeat-containing protein At5g04810, chloroplastic (952 aa).

A chloroplast-targeting transit peptide spans 1–60 (MDNGGSVLSLSAPHFPYSATILRRHSPVASISFSLKQPPPQPPEPPESPPDLRRPEKSIG). Disordered regions lie at residues 30–95 (SISF…VSPL) and 115–163 (LRLS…EFRQ). Pro residues predominate over residues 37–49 (QPPPQPPEPPESP). Residues 58-68 (SIGSSSSSSSP) are compositionally biased toward low complexity. Positions 122-133 (SPPPPPPPPPPV) are enriched in pro residues. Positions 137 to 163 (TQFRDEFRSDTKPPEEETRNPQQEFRQ) are enriched in basic and acidic residues. The 72-residue stretch at 167-238 (IFVGNLPTWI…VEFHGRILTV (72 aa)) folds into the RRM domain. Residues 259–280 (EGEEDTKMSNKSSWHQEREGSR) show a composition bias toward basic and acidic residues. The segment at 259-281 (EGEEDTKMSNKSSWHQEREGSRK) is disordered. PPR repeat units follow at residues 308 to 342 (SRTE…GITP), 343 to 377 (TSRI…GIEM), 378 to 412 (SLVT…HKTL), 413 to 447 (NASI…GIDA), 448 to 482 (PIAI…GFTP), 483 to 517 (TVVT…GVKH), 518 to 552 (NLKT…GMKP), 553 to 587 (DVIL…RHRP), 588 to 622 (TTRT…GCVP), 623 to 657 (TVHT…GVSA), 658 to 692 (NEHT…GLDV), 693 to 727 (DIFT…NIPR), 728 to 762 (NSFV…GVKP), 763 to 797 (DIHT…GVKP), and 798 to 832 (NIKT…GIKP). Residues 918-952 (DQVSDVDSDEDDVDGEDGEDDEDVNSVSDLLSPYK) form a disordered region. A compositionally biased stretch (acidic residues) spans 921-941 (SDVDSDEDDVDGEDGEDDEDV).

The protein belongs to the PPR family. P subfamily.

Its subcellular location is the plastid. The protein localises to the chloroplast. In terms of biological role, may play a role in the plastid ribosome biogenesis. This is Pentatricopeptide repeat-containing protein At5g04810, chloroplastic (PPR4) from Arabidopsis thaliana (Mouse-ear cress).